Reading from the N-terminus, the 261-residue chain is Indole-3-glycerol phosphate synthase (261 aa).

Belongs to the TrpC family.

It carries out the reaction 1-(2-carboxyphenylamino)-1-deoxy-D-ribulose 5-phosphate + H(+) = (1S,2R)-1-C-(indol-3-yl)glycerol 3-phosphate + CO2 + H2O. It participates in amino-acid biosynthesis; L-tryptophan biosynthesis; L-tryptophan from chorismate: step 4/5. This chain is Indole-3-glycerol phosphate synthase, found in Burkholderia cenocepacia (strain HI2424).